A 284-amino-acid polypeptide reads, in one-letter code: RNase adapter protein RapZ (284 aa).

An ATP-binding site is contributed by 8 to 15 (GRSGSGKS). 56–59 (DVRN) contacts GTP. The segment at 266 to 284 (RSRGKNVQSRHRTLEKRKT) is RNA-binding.

This sequence belongs to the RapZ-like family. RapZ subfamily. Homotrimer.

Modulates the synthesis of GlmS, by affecting the processing and stability of the regulatory small RNA GlmZ. When glucosamine-6-phosphate (GlcN6P) concentrations are high in the cell, RapZ binds GlmZ and targets it to cleavage by RNase E. Consequently, GlmZ is inactivated and unable to activate GlmS synthesis. Under low GlcN6P concentrations, RapZ is sequestered and inactivated by an other regulatory small RNA, GlmY, preventing GlmZ degradation and leading to synthesis of GlmS. The protein is RNase adapter protein RapZ of Salmonella arizonae (strain ATCC BAA-731 / CDC346-86 / RSK2980).